We begin with the raw amino-acid sequence, 1160 residues long: ATP-dependent RNA helicase dhx8 (1160 aa).

Disordered stretches follow at residues Thr75 to Asn140 and Pro153 to Arg192. Low complexity-rich tracts occupy residues Thr76–Asn110 and Asn122–Gln132. A compositionally biased stretch (basic and acidic residues) spans Asp155 to Arg192. Residues Tyr202–Lys274 enclose the S1 motif domain. Residues Ile294–Asn320 are compositionally biased toward low complexity. Disordered stretches follow at residues Ile294–Lys334 and Lys409–Glu438. Polar residues predominate over residues Gly412–Leu424. The segment covering Ser425–Glu438 has biased composition (basic and acidic residues). Positions Leu518 to Pro681 constitute a Helicase ATP-binding domain. Residue Gly531–Thr538 coordinates ATP. A DEAH box motif is present at residues Asp628–His631. Positions Tyr699–Gly879 constitute a Helicase C-terminal domain.

Belongs to the DEAD box helicase family. DEAH subfamily. DDX8/PRP22 sub-subfamily. Identified in the spliceosome complex.

It is found in the nucleus. The enzyme catalyses ATP + H2O = ADP + phosphate + H(+). Its function is as follows. Facilitates nuclear export of spliced mRNA by releasing the RNA from the spliceosome. This is ATP-dependent RNA helicase dhx8 (dhx8) from Dictyostelium discoideum (Social amoeba).